Here is a 307-residue protein sequence, read N- to C-terminus: Transcription initiation factor IIB (307 aa).

Tandem repeats lie at residues 123-206 and 217-298.

The protein belongs to the TFIIB family.

Functionally, stabilizes TBP binding to an archaeal box-A promoter. Also responsible for recruiting RNA polymerase II to the pre-initiation complex (DNA-TBP-TFIIB). The sequence is that of Transcription initiation factor IIB from Sulfolobus acidocaldarius (strain ATCC 33909 / DSM 639 / JCM 8929 / NBRC 15157 / NCIMB 11770).